The sequence spans 346 residues: NADH-quinone oxidoreductase subunit H (346 aa).

Transmembrane regions (helical) follow at residues Ile6–Tyr26, Val76–Val96, Ile128–Ala148, Ile166–Leu186, Leu198–Phe218, Ile260–Ile280, Leu289–Val309, and Leu324–Ile344.

It belongs to the complex I subunit 1 family. In terms of assembly, NDH-1 is composed of 14 different subunits. Subunits NuoA, H, J, K, L, M, N constitute the membrane sector of the complex.

The protein localises to the cell inner membrane. The catalysed reaction is a quinone + NADH + 5 H(+)(in) = a quinol + NAD(+) + 4 H(+)(out). In terms of biological role, NDH-1 shuttles electrons from NADH, via FMN and iron-sulfur (Fe-S) centers, to quinones in the respiratory chain. The immediate electron acceptor for the enzyme in this species is believed to be ubiquinone. Couples the redox reaction to proton translocation (for every two electrons transferred, four hydrogen ions are translocated across the cytoplasmic membrane), and thus conserves the redox energy in a proton gradient. This subunit may bind ubiquinone. In Leptospira interrogans serogroup Icterohaemorrhagiae serovar copenhageni (strain Fiocruz L1-130), this protein is NADH-quinone oxidoreductase subunit H.